Consider the following 771-residue polypeptide: MFSLKPPRPSFRSYLLPPAQTDDKISSEPKIKKLEPVLLPGEIVVNEVNFVRKCIATDTSQYDLWGKLICSNFKISFITDDPMPLQKFHYRNLLLGEHDVPLTCIEQIVTVNDHKRKQKVLGPNQKLKFNPTELIIYCKDFRIVRFRFDESGPESAKKVCLAIAHYSQPTDLQLLFAFEYVGKKYHNSANKVNGVSSGGGGVWSGAGSTGSQRTPLFETYSDWDRETKRTGASGWRVCSINEGYMISTCLPEYFVVPSSLADQDLKIFSHSFVGRRMPFWCWSHSNGSALVRMALIKDALQQRKIDQRICNAITKSHPQRSDVYKSDLDKALPNIQEIQAAFVKLKQLCVNEPFEETEEKWLSSLESTRWLEYVRAFLKHSAELVYILESQRLSVVLQEEEGRDLSCLVASLIQVMMDPYFRTITGFQSLIQKEWVMAGYQFLDRCNHLKRSEKESPLFLLFLDTTWQLLEQYPAAFEFSETYLAVLCDSTRISLFGTFLFNSPHQRVKQSTEFAISKNIQLGDEKGLKFPSVWDWALQFTAKDRTLFHNPFYIGKSTPCVQNGSRKSFKRTKKSYSSTLRGMPSCLKNGIITDQDLLPRRNSLVLKLKPDPPQHTDSQHSGAEQYFKEWFSRPANLHGIILPRLSGTHIKLWKLCYFRWVPEAQINLGGSIMAFHKLSLLADEVDMLSRMLRQHRSGPLEACYAELDQSRMYFRATGPHDTLGTPEFLSSSFPFSPVGNLCRRSILGTPLSKFLSGAKIWLSTETLANED.

The region spanning 217-657 (FETYSDWDRE…THIKLWKLCY (441 aa)) is the Myotubularin phosphatase domain. A phosphoserine mark is found at serine 603 and serine 745.

This sequence belongs to the protein-tyrosine phosphatase family. Non-receptor class myotubularin subfamily.

In Mus musculus (Mouse), this protein is Myotubularin-related protein 10 (Mtmr10).